The following is a 611-amino-acid chain: Alkyldihydroxyacetonephosphate synthase (611 aa).

In terms of domain architecture, FAD-binding PCMH-type spans 137 to 317 (VKNAPDLIVL…TEAVMKVHAV (181 aa)). FAD contacts are provided by residues 169-175 (PMGGGSN), 237-243 (DSFEFST), 250-255 (TCSSGH), and 301-307 (EGTLGII). Arg447 serves as a coordination point for substrate. The active-site Proton donor/acceptor is Tyr508. The tract at residues 544-546 (HHH) is important for enzyme activity. Residues 609–611 (PKL) carry the Microbody targeting signal motif.

It belongs to the FAD-binding oxidoreductase/transferase type 4 family. In terms of assembly, homodimer. The cofactor is FAD.

Its subcellular location is the peroxisome. The catalysed reaction is a long chain fatty alcohol + a 1-acylglycerone 3-phosphate = a 1-O-alkylglycerone 3-phosphate + a long-chain fatty acid + H(+). It functions in the pathway glycerolipid metabolism; ether lipid biosynthesis. Functionally, catalyzes the exchange of an acyl for a long-chain alkyl group and the formation of the ether bond in the biosynthesis of ether phospholipids. The polypeptide is Alkyldihydroxyacetonephosphate synthase (eapA) (Dictyostelium discoideum (Social amoeba)).